The sequence spans 295 residues: MYYHIDSKSEIDCNDYLFFTDVTKVFSSTTYFANSYLFECLPNESDPEFKITKKSGGHIMKRFVINNKYPLDNVSTIEFLLDNGSLGVNFIVEWAFSKSNIDILRFFQERNITIPFEPKYSHATGELFKSKSVTIKYKHSSLLCNVRSTNKYQLIPREINYENLDVHRYVIDNYEYFGTYLYAYFFYESWIGKNELSLYILQTIKIDVDLILKDVIRVANITYIEMLVGYGAIINNDIFESAFKYQDVALVKYLIENYDIDYDLDKLIVESKNIEILQYLLSLGNKTISEYWEVY.

This is an uncharacterized protein from Acanthamoeba polyphaga (Amoeba).